Consider the following 371-residue polypeptide: UDP-N-acetylglucosamine--N-acetylmuramyl-(pentapeptide) pyrophosphoryl-undecaprenol N-acetylglucosamine transferase (371 aa).

Residues 10–12 (TGG), N124, R165, S197, I251, and Q296 each bind UDP-N-acetyl-alpha-D-glucosamine.

The protein belongs to the glycosyltransferase 28 family. MurG subfamily.

Its subcellular location is the cell membrane. The enzyme catalyses di-trans,octa-cis-undecaprenyl diphospho-N-acetyl-alpha-D-muramoyl-L-alanyl-D-glutamyl-meso-2,6-diaminopimeloyl-D-alanyl-D-alanine + UDP-N-acetyl-alpha-D-glucosamine = di-trans,octa-cis-undecaprenyl diphospho-[N-acetyl-alpha-D-glucosaminyl-(1-&gt;4)]-N-acetyl-alpha-D-muramoyl-L-alanyl-D-glutamyl-meso-2,6-diaminopimeloyl-D-alanyl-D-alanine + UDP + H(+). Its pathway is cell wall biogenesis; peptidoglycan biosynthesis. Cell wall formation. Catalyzes the transfer of a GlcNAc subunit on undecaprenyl-pyrophosphoryl-MurNAc-pentapeptide (lipid intermediate I) to form undecaprenyl-pyrophosphoryl-MurNAc-(pentapeptide)GlcNAc (lipid intermediate II). The sequence is that of UDP-N-acetylglucosamine--N-acetylmuramyl-(pentapeptide) pyrophosphoryl-undecaprenol N-acetylglucosamine transferase from Carboxydothermus hydrogenoformans (strain ATCC BAA-161 / DSM 6008 / Z-2901).